Reading from the N-terminus, the 382-residue chain is S-adenosylmethionine synthase (382 aa).

Residue His-15 participates in ATP binding. Asp-17 serves as a coordination point for Mg(2+). Glu-43 provides a ligand contact to K(+). L-methionine is bound by residues Glu-56 and Gln-99. The tract at residues 99 to 109 (QSPDINQGVDR) is flexible loop. ATP-binding positions include 164–166 (DAK), 230–231 (RF), Asp-239, 245–246 (RK), Ala-262, and Lys-266. Position 239 (Asp-239) interacts with L-methionine. Lys-270 serves as a coordination point for L-methionine.

This sequence belongs to the AdoMet synthase family. Homotetramer; dimer of dimers. It depends on Mg(2+) as a cofactor. K(+) serves as cofactor.

The protein resides in the cytoplasm. It carries out the reaction L-methionine + ATP + H2O = S-adenosyl-L-methionine + phosphate + diphosphate. It functions in the pathway amino-acid biosynthesis; S-adenosyl-L-methionine biosynthesis; S-adenosyl-L-methionine from L-methionine: step 1/1. Its function is as follows. Catalyzes the formation of S-adenosylmethionine (AdoMet) from methionine and ATP. The overall synthetic reaction is composed of two sequential steps, AdoMet formation and the subsequent tripolyphosphate hydrolysis which occurs prior to release of AdoMet from the enzyme. In Glaesserella parasuis serovar 5 (strain SH0165) (Haemophilus parasuis), this protein is S-adenosylmethionine synthase.